The sequence spans 552 residues: Hydroxylamine reductase (552 aa).

Residues Cys5, Cys8, Cys20, and Cys27 each contribute to the [2Fe-2S] cluster site. Residues His251, Glu275, Cys319, Cys407, Cys435, Cys460, Glu494, and Lys496 each contribute to the hybrid [4Fe-2O-2S] cluster site. Cys407 is subject to Cysteine persulfide.

Belongs to the HCP family. [2Fe-2S] cluster is required as a cofactor. It depends on hybrid [4Fe-2O-2S] cluster as a cofactor.

It localises to the cytoplasm. It carries out the reaction A + NH4(+) + H2O = hydroxylamine + AH2 + H(+). Catalyzes the reduction of hydroxylamine to form NH(3) and H(2)O. The sequence is that of Hydroxylamine reductase from Shigella sonnei (strain Ss046).